The sequence spans 202 residues: MKIVLASNNPGKLAELQALLAPLGLELLSQAELGIPEAEEPFRTFVENALAKARHASRLSGLSALADDAGLCVDAFGGLPGVDTAFYATRFGYAKGDNNNVRALLEQMAHLTQPGQRRAALVSTLVAVRSADDPEPLIASGRVAGEIALQPVGSNGFGFDPVMFIPEFAQTFAQLPVSVKNANSHRGKATAQMIALLRERWL.

Residue 7-12 (SNNPGK) participates in substrate binding. Residues E39 and D68 each coordinate Mg(2+). The active-site Proton acceptor is the D68. Substrate contacts are provided by residues A69, 157–160 (FGFD), K180, and 185–186 (HR).

Belongs to the HAM1 NTPase family. As to quaternary structure, homodimer. Requires Mg(2+) as cofactor.

It carries out the reaction XTP + H2O = XMP + diphosphate + H(+). The enzyme catalyses dITP + H2O = dIMP + diphosphate + H(+). The catalysed reaction is ITP + H2O = IMP + diphosphate + H(+). Its function is as follows. Pyrophosphatase that catalyzes the hydrolysis of nucleoside triphosphates to their monophosphate derivatives, with a high preference for the non-canonical purine nucleotides XTP (xanthosine triphosphate), dITP (deoxyinosine triphosphate) and ITP. Seems to function as a house-cleaning enzyme that removes non-canonical purine nucleotides from the nucleotide pool, thus preventing their incorporation into DNA/RNA and avoiding chromosomal lesions. The chain is dITP/XTP pyrophosphatase from Polaromonas naphthalenivorans (strain CJ2).